The sequence spans 201 residues: Ribonuclease HII (201 aa).

One can recognise an RNase H type-2 domain in the interval 12–201 (DLVAGVDEVG…VRELLDVSVQ (190 aa)). Residues Asp18, Glu19, and Asp110 each contribute to the a divalent metal cation site.

It belongs to the RNase HII family. Mn(2+) serves as cofactor. The cofactor is Mg(2+).

The protein resides in the cytoplasm. It catalyses the reaction Endonucleolytic cleavage to 5'-phosphomonoester.. Endonuclease that specifically degrades the RNA of RNA-DNA hybrids. The polypeptide is Ribonuclease HII (Pseudomonas aeruginosa (strain ATCC 15692 / DSM 22644 / CIP 104116 / JCM 14847 / LMG 12228 / 1C / PRS 101 / PAO1)).